Here is a 548-residue protein sequence, read N- to C-terminus: Chaperonin GroEL 1 (548 aa).

Residues 30-33, Lys-51, 87-91, Gly-415, 479-481, and Asp-495 each bind ATP; these read TLGP, DGTTT, and NAA.

Belongs to the chaperonin (HSP60) family. In terms of assembly, forms a cylinder of 14 subunits composed of two heptameric rings stacked back-to-back. Interacts with the co-chaperonin GroES.

Its subcellular location is the cytoplasm. It catalyses the reaction ATP + H2O + a folded polypeptide = ADP + phosphate + an unfolded polypeptide.. Functionally, together with its co-chaperonin GroES, plays an essential role in assisting protein folding. The GroEL-GroES system forms a nano-cage that allows encapsulation of the non-native substrate proteins and provides a physical environment optimized to promote and accelerate protein folding. In Anaeromyxobacter dehalogenans (strain 2CP-C), this protein is Chaperonin GroEL 1.